A 205-amino-acid polypeptide reads, in one-letter code: Syndecan 4-B (205 aa).

The first 17 residues, 1–17, serve as a signal peptide directing secretion; that stretch reads MNRLLLLLALVLSGVAA. The Extracellular portion of the chain corresponds to 18-162; sequence ESIRETETMD…FFQRTEVIVA (145 aa). Positions 26 to 113 are disordered; the sequence is MDPTSMLEYE…HDFDETKTGR (88 aa). O-linked (Xyl...) (glycosaminoglycan) serine glycans are attached at residues S37, S73, and S75. Positions 44–94 are enriched in acidic residues; it reads VFVDEDDDDDYEDGVDYEIDSESDNDEDYSGSGDDDFDDEDNVEDEDEEET. Residues 102-113 are compositionally biased toward basic and acidic residues; the sequence is PEHDFDETKTGR. The helical transmembrane segment at 163-183 threads the bilayer; the sequence is IIAGTLVGLVVAVSFIVFLVI. Residues 184 to 205 lie on the Cytoplasmic side of the membrane; sequence RRNQNGDLVKKPIYKKTSTMEV.

This sequence belongs to the syndecan proteoglycan family. Interacts with the Wnt receptor fzd7 and its signal transducer dvl2/dsh. Post-translationally, O-glycosylated; contains both chondroitin sulfate and heparan sulfate. Ser-37, Ser-73 and Ser-75 can all be modified by either chondroitin sulfate or heparan sulfate, and the protein exists in forms that contain only chondroitin sulfate, only heparan sulfate and both chondroitin sulfate and heparan sulfate. Expressed in the animal hemisphere from the 4-cell to the blastula stage. During gastrulation, expressed in the involuting dorsal mesoderm and ectoderm. After involution, localized mainly to the anterior neuroectoderm. At later stages, expressed in the brain, branchial arches, pronephros, tailbud, and at low levels in the somites.

It localises to the membrane. Cell surface proteoglycan. Regulates non-canonical Wnt signaling, being necessary and sufficient for fibronectrin-mediated translocation of dvl2/dsh to the plasma membrane. Required for proper convergent extension movements during gastrulation, which shape the neural plate, and for subsequent neural tube closure. The chain is Syndecan 4-B (sdc4-b) from Xenopus laevis (African clawed frog).